Consider the following 128-residue polypeptide: MAGSLSWVAGRRLWGLVPLACRSFFLGVPRLFHVRVTLPPPKVIDRWNQKRAMFGVYDNIGILGNFEKHPKELIKGPVWLRGWKGNELQRCIRKKRMVGNRMFIDDLHNLNKRISFLYKRFNRHGKHR.

The transit peptide at 1-31 (MAGSLSWVAGRRLWGLVPLACRSFFLGVPRL) directs the protein to the mitochondrion.

The protein belongs to the mitochondrion-specific ribosomal protein mL51 family. As to quaternary structure, component of the mitochondrial ribosome large subunit (39S) which comprises a 16S rRNA and about 50 distinct proteins. Interacts with OXA1L.

It localises to the mitochondrion. This is Large ribosomal subunit protein mL51 (MRPL51) from Bos taurus (Bovine).